The sequence spans 464 residues: Probable glycosyltransferase Saci_1499 (464 aa).

6 consecutive transmembrane segments (helical) span residues 6-26, 300-320, 337-357, 373-393, 416-436, and 439-459; these read IFLN…QIIL, LIIY…STLL, ALLF…SLAL, LTAF…KGLL, IIAI…LYIY, and YYVT…TMLL.

This sequence belongs to the glycosyltransferase 2 family.

It localises to the cell membrane. Probably part of a 4-gene DNA damage response locus in which the upstream ups system, in combination with this downstream locus, functions in homologous recombination to rescue Sulfolobales from DNA-damaging threats. This is Probable glycosyltransferase Saci_1499 from Sulfolobus acidocaldarius (strain ATCC 33909 / DSM 639 / JCM 8929 / NBRC 15157 / NCIMB 11770).